The primary structure comprises 334 residues: DNA-directed RNA polymerase subunit alpha (334 aa).

Positions M1–Q234 are alpha N-terminal domain (alpha-NTD). Residues I248–G334 form an alpha C-terminal domain (alpha-CTD) region.

Belongs to the RNA polymerase alpha chain family. As to quaternary structure, homodimer. The RNAP catalytic core consists of 2 alpha, 1 beta, 1 beta' and 1 omega subunit. When a sigma factor is associated with the core the holoenzyme is formed, which can initiate transcription.

The catalysed reaction is RNA(n) + a ribonucleoside 5'-triphosphate = RNA(n+1) + diphosphate. DNA-dependent RNA polymerase catalyzes the transcription of DNA into RNA using the four ribonucleoside triphosphates as substrates. This is DNA-directed RNA polymerase subunit alpha from Thioalkalivibrio sulfidiphilus (strain HL-EbGR7).